The chain runs to 219 residues: RPA-interacting protein (219 aa).

Phosphoserine is present on serine 18. A Glycyl lysine isopeptide (Lys-Gly) (interchain with G-Cter in SUMO); in isoform 2 cross-link involves residue lysine 121. The RIP-type zinc finger occupies 137–212; sequence CPVCTKYNLR…SSLLMSCLAC (76 aa). The segment at 164–180 is mediates nuclear export; that stretch reads SSELTEQKLRACLEGSI.

In terms of assembly, interacts with the RPA1 subunit of RPA complex. Sumoylated. Sumoylation is required for localization in the nuclear PML body and transport of RPA complex in PML body. Upon UV irradiation and during S phase, it is desumoylated, releasing RPA complex that is translocated to sites of DNA damage. Sumoylation takes place at different Lys residues. Variant 'Lys-103' adds a sumoylation site and increases total sumoylation levels. In terms of tissue distribution, widely expressed. Expressed in pancreas, kidney, muscle, liver, lung, placenta, brain, heart, leukocytes, colon, intestine, ovary, testis, prostate, thymus and spleen.

The protein localises to the cytoplasm. The protein resides in the nucleus. It localises to the PML body. Its function is as follows. Mediates the import of RPA complex into the nucleus, possibly via some interaction with importin beta. Isoform 2 is sumoylated and mediates the localization of RPA complex into the PML body of the nucleus, thereby participating in RPA function in DNA metabolism. This chain is RPA-interacting protein (RPAIN), found in Homo sapiens (Human).